The sequence spans 726 residues: Kinesin-like protein KIN-10B (726 aa).

Disordered stretches follow at residues 1 to 20 (MEQQQKQEPGGGGGGVRVVA), 60 to 82 (AATAAASGRGDGPKDKQQQQQQK), and 402 to 423 (KNARPGFNNSGVKGGQTPTANR). One can recognise a Kinesin motor domain in the interval 15 to 359 (GVRVVARICP…LALASRSSQV (345 aa)). The span at 408 to 423 (FNNSGVKGGQTPTANR) shows a compositional bias: polar residues.

This sequence belongs to the TRAFAC class myosin-kinesin ATPase superfamily. Kinesin family. KIN-10 subfamily.

This chain is Kinesin-like protein KIN-10B, found in Oryza sativa subsp. japonica (Rice).